The sequence spans 89 residues: MSLSVEAKAKIVAEFGRDAKDTGSSEVQIALLTAQINHLQAHFAEHKKDHHGRRGLLRMVSRRRKLLDYLKRTDLAKYSETIARLGLRR.

It belongs to the universal ribosomal protein uS15 family. Part of the 30S ribosomal subunit. Forms a bridge to the 50S subunit in the 70S ribosome, contacting the 23S rRNA.

Its function is as follows. One of the primary rRNA binding proteins, it binds directly to 16S rRNA where it helps nucleate assembly of the platform of the 30S subunit by binding and bridging several RNA helices of the 16S rRNA. Functionally, forms an intersubunit bridge (bridge B4) with the 23S rRNA of the 50S subunit in the ribosome. This Actinobacillus pleuropneumoniae serotype 5b (strain L20) protein is Small ribosomal subunit protein uS15.